The sequence spans 158 residues: C-type lection lectoxin-Enh3 (158 aa).

Residues 1–23 (MGQFTVVSLGLLAMFLSLSGAKG) form the signal peptide. Intrachain disulfides connect cysteine 26-cysteine 37, cysteine 54-cysteine 154, and cysteine 129-cysteine 146. The 123-residue stretch at 33-155 (RNGVCNKLFP…CASLHPFICQ (123 aa)) folds into the C-type lectin domain. The Mannose-binding signature appears at 119 to 121 (EPN). Ca(2+) is bound by residues glutamate 127, asparagine 142, and aspartate 143.

It belongs to the true venom lectin family. Expressed by the venom gland.

Its subcellular location is the secreted. Its function is as follows. Mannose-binding lectin which recognizes specific carbohydrate structures and agglutinates a variety of animal cells by binding to cell-surface glycoproteins and glycolipids. May be a calcium-dependent lectin. In Pseudoferania polylepis (Macleay's water snake), this protein is C-type lection lectoxin-Enh3.